Consider the following 145-residue polypeptide: Transmembrane protein 170A (145 aa).

The Lumenal segment spans residues 1–50 (MIEALIVGEMQDVQIGFVKQILSLNLVPRSNNTTCGNNTSLCDFSEMWYG). N-linked (GlcNAc...) asparagine glycosylation is found at Asn31 and Asn37. A helical membrane pass occupies residues 51-71 (VFLWAVVSSLIFHLPAALLAL). The Cytoplasmic segment spans residues 72–81 (ATLRRHKVAR). A helical membrane pass occupies residues 82–102 (FFPLGILLMGIIGPLFGGVLT). Over 103-117 (SAAIAGVYKAAGKSM) the chain is Lumenal. The chain crosses the membrane as a helical span at residues 118–138 (FSLEALVFGVGQSLFIFIISF). Residues 139-145 (LRILATL) lie on the Cytoplasmic side of the membrane.

It belongs to the TMEM170 family.

The protein resides in the endoplasmic reticulum membrane. Its subcellular location is the nucleus envelope. Functionally, may regulate membrane morphogenesis in the endoplasmic reticulum (ER) by promoting ER sheet formation at the expense of ER tubules. The protein is Transmembrane protein 170A (tmem170a) of Danio rerio (Zebrafish).